A 309-amino-acid chain; its full sequence is Tagatose-6-phosphate kinase (309 aa).

Belongs to the carbohydrate kinase PfkB family. LacC subfamily.

The enzyme catalyses D-tagatofuranose 6-phosphate + ATP = D-tagatofuranose 1,6-bisphosphate + ADP + H(+). Its pathway is carbohydrate metabolism; D-tagatose 6-phosphate degradation; D-glyceraldehyde 3-phosphate and glycerone phosphate from D-tagatose 6-phosphate: step 1/2. The protein is Tagatose-6-phosphate kinase of Streptococcus pyogenes serotype M1.